A 146-amino-acid chain; its full sequence is Protein new-glue 3 (146 aa).

The N-terminal stretch at 1–23 (MRYSCVLLLLATVACLLIPQTGG) is a signal peptide. The disordered stretch occupies residues 23 to 146 (GSTATTTSTS…RRARSARRLS (124 aa)). A compositionally biased stretch (low complexity) spans 24-66 (STATTTSTSASATTTTSASATTTTASDTTTTTAATTTTSSSSS). 4 consecutive repeat copies span residues 31-38 (TSASATTT), 39-46 (TSASATTT), 47-53 (TASDTTT), and 54-61 (TTAATTTT). The 4 X 8 AA approximate tandem repeats of T-S-A-S-A-T-T-T stretch occupies residues 31 to 61 (TSASATTTTSASATTTTASDTTTTTAATTTT). Basic residues predominate over residues 67 to 92 (KSKKKKRTYHYTRHVYRPKRIRHIYR). Basic and acidic residues predominate over residues 93–106 (HKADDDESSTDRTS). The span at 116 to 132 (SSSSSSSGSTSSRSGNS) shows a compositional bias: low complexity. Positions 133–146 (RIRRRRARSARRLS) are enriched in basic residues.

As to expression, salivary gland specific.

It is found in the secreted. The chain is Protein new-glue 3 (ng3) from Drosophila melanogaster (Fruit fly).